We begin with the raw amino-acid sequence, 183 residues long: Protein jagunal homolog 1-B (183 aa).

The Cytoplasmic portion of the chain corresponds to 1-39 (MASRAGPRATGTDGSDYQHRERVASHYQMSVALKSEIKK). The helical transmembrane segment at 40-60 (LNIAHAVVWFLVAAQVLVSQL) threads the bilayer. The Lumenal portion of the chain corresponds to 61-71 (NLVSHKVVASP). The chain crosses the membrane as a helical span at residues 72-92 (YQWEYTYLLSIIPTVFSFMAL). Residues 93 to 99 (PKNNISY) lie on the Cytoplasmic side of the membrane. Residues 100–120 (LVISMISGGLFCIGPILYGGM) traverse the membrane as a helical segment. Residues 121–137 (EMFPVAQQLYRHGKAYR) lie on the Lumenal side of the membrane. A helical transmembrane segment spans residues 138 to 158 (FIFGFSAVSIMYLVLIISVQV). The Cytoplasmic portion of the chain corresponds to 159–183 (HGWQIYYSKKLLDAWFTNTQDKKKK).

Belongs to the jagunal family.

The protein localises to the endoplasmic reticulum membrane. Endoplasmic reticulum transmembrane protein involved in vesicle-mediated transport, which is required for neutrophil function. This is Protein jagunal homolog 1-B (jagn1b) from Danio rerio (Zebrafish).